Reading from the N-terminus, the 351-residue chain is UDP-glucose 4-epimerase 5 (351 aa).

Residues 13-15 (GYI), 34-38 (DNLDN), 64-65 (DL), Phe-86, and Lys-90 each bind NAD(+). 130 to 132 (SAT) serves as a coordination point for substrate. Tyr-154 acts as the Proton acceptor in catalysis. NAD(+) contacts are provided by Lys-158 and Tyr-182. Residues 182-184 (YFN), 203-205 (NNL), 221-223 (TVF), Arg-236, and 298-301 (RPGD) each bind substrate.

Belongs to the NAD(P)-dependent epimerase/dehydratase family. Forms homodimers and heterodimers. The cofactor is NAD(+). In terms of tissue distribution, widely expressed.

It carries out the reaction UDP-alpha-D-glucose = UDP-alpha-D-galactose. It participates in carbohydrate metabolism; galactose metabolism. Its activity is regulated as follows. Enhanced activity by NaCl. Inhibited by UDP. In terms of biological role, catalyzes the interconversion between UDP-glucose and UDP-galactose. The sequence is that of UDP-glucose 4-epimerase 5 from Arabidopsis thaliana (Mouse-ear cress).